Consider the following 474-residue polypeptide: Glutamate--tRNA ligase (474 aa).

The short motif at 10 to 20 (PSPTGYLHIGG) is the 'HIGH' region element. Zn(2+) is bound by residues C107, C109, C134, and D136. A 'KMSKS' region motif is present at residues 244-248 (RLSKR). ATP is bound at residue K247.

The protein belongs to the class-I aminoacyl-tRNA synthetase family. Glutamate--tRNA ligase type 1 subfamily. In terms of assembly, monomer. It depends on Zn(2+) as a cofactor.

Its subcellular location is the cytoplasm. The catalysed reaction is tRNA(Glu) + L-glutamate + ATP = L-glutamyl-tRNA(Glu) + AMP + diphosphate. In terms of biological role, catalyzes the attachment of glutamate to tRNA(Glu) in a two-step reaction: glutamate is first activated by ATP to form Glu-AMP and then transferred to the acceptor end of tRNA(Glu). The protein is Glutamate--tRNA ligase of Anaeromyxobacter sp. (strain K).